The chain runs to 566 residues: DNA helicase/primase (566 aa).

Zn(2+) contacts are provided by C17, C20, C36, and C39. The segment at 17–39 (CDNCGSSDGNSLFSDGHTFCYVC) adopts a C4-like; zinc ribbon fold zinc-finger fold. Residues 151–238 (KKIVVTEGEI…RVAVLPCKDA (88 aa)) enclose the Toprim domain. 3 residues coordinate Mg(2+): E157, D207, and D237. An SF4 helicase domain is found at 281–548 (SEESVGLLFS…TGWLEPSSYS (268 aa)). An ATP-binding site is contributed by 312–319 (SGSGMGKS). Positions 543–566 (EPSSYSGEEESHSESTDWSNDTDF) are disordered. The binding to viral DNA polymerase stretch occupies residues 550–566 (EEESHSESTDWSNDTDF).

It belongs to the Teseptimavirus DNA helicase/primase family. In terms of assembly, homohexamer. Assembles as a hexamer onto linear or circular ssDNA in the presence of ATP or dTTP. Present in a mixture of heptamers and hexamers in the absence of DNA. Interacts (via C-terminus) with the viral DNA polymerase that is bound to DNA; this interaction is essential to initiate leading-strand DNA synthesis. The priming complex consists of 2 DNA polymerases and 1 helicase-primase hexamer that assemble on the DNA template. Interacts with the single-stranded DNA-binding protein. Part of the replicase complex that includes the DNA polymerase, thioredoxin, the primase/helicase and the single-stranded DNA binding protein. It depends on Mg(2+) as a cofactor.

The enzyme catalyses ATP + H2O = ADP + phosphate + H(+). Functionally, ATP-dependent DNA helicase and primase essential for viral DNA replication and recombination. The helicase moves 5' -&gt; 3' on the lagging strand template, unwinding the DNA duplex ahead of the leading strand polymerase at the replication fork and generating ssDNA for both leading and lagging strand synthesis. ATP or dTTP hydrolysis propels each helicase domain to translocate 2 nt per step sequentially along DNA. Mediates strand transfer when a joint molecule is available and participates in recombinational DNA repair through its role in strand exchange. Primase activity synthesizes short RNA primers at the sequence 5'-GTC-3' on the lagging strand that the polymerase elongates using dNTPs and providing the primase is still present. The polypeptide is DNA helicase/primase (Escherichia phage T7 (Bacteriophage T7)).